The sequence spans 338 residues: MANRANRHAARTEDSDNTINYVQCDGLAVMKMVKHCHEESSNMDLAQGALLGLVVDKCLEITNCFPFPKSGDETMDEEMYQLTVMRRLRRVNVDHLHVGWYQSSDVGNSLSLALLESQYHYQTSIEESVVVVYDTQKSSRGFLCLKAYRLTPQAIQMYKDGDFTPEAFRTLKVGYESLFAEIPIVIKNSPLTNIMMSELNELLPEDKGHNFLDLGTATVLENQMRSLIERVDELYQEAVRYNKYQQVVFKQDTEKHRALAKLAAENAVRTSKGEPTVAEEEVIKQFRPMTAPNRLTATITSGQINTHAQHIAQFCSQSLAKLFITESLQNAKEAKETK.

In terms of domain architecture, MPN spans 22–154 (VQCDGLAVMK…LKAYRLTPQA (133 aa)).

Belongs to the eIF-3 subunit H family. As to quaternary structure, component of the eukaryotic translation initiation factor 3 (eIF-3) complex. The eIF-3 complex interacts with pix. Interacts with mxt.

It localises to the cytoplasm. In terms of biological role, component of the eukaryotic translation initiation factor 3 (eIF-3) complex, which is involved in protein synthesis of a specialized repertoire of mRNAs and, together with other initiation factors, stimulates binding of mRNA and methionyl-tRNAi to the 40S ribosome. The eIF-3 complex specifically targets and initiates translation of a subset of mRNAs involved in cell proliferation. The chain is Eukaryotic translation initiation factor 3 subunit H from Drosophila yakuba (Fruit fly).